Reading from the N-terminus, the 189-residue chain is Density-regulated protein homolog (189 aa).

An SUI1 domain is found at 105 to 172 (ICVSRAARGK…DLFDVIPEKW (68 aa)).

It belongs to the DENR family. In terms of assembly, interacts with MCTS1.

Regulates translation as part of a complex with MCTS1. Specifically required for translational re-initiation in mRNAs containing upstream open reading frames (uORFs). Not required for standard translational initiation. Regulates expression of a subset of gene products including mbc, InR and EcR. The polypeptide is Density-regulated protein homolog (Drosophila melanogaster (Fruit fly)).